Here is a 956-residue protein sequence, read N- to C-terminus: UvrABC system protein A (956 aa).

33 to 40 lines the ATP pocket; the sequence is GLSGSGKS. The C4-type zinc finger occupies 252-279; sequence CPYCGFSVGELEPRMFSFNSPFGACPTC. ABC transporter domains follow at residues 309–587 and 607–936; these read WRPI…KNSI and GNGL…KYLK. 639–646 is an ATP binding site; sequence GVSGSGKS. A C4-type zinc finger spans residues 738–764; it reads CEACKGDGIIKIEMHFLPDVYVPCEVC.

Belongs to the ABC transporter superfamily. UvrA family. Forms a heterotetramer with UvrB during the search for lesions.

It localises to the cytoplasm. In terms of biological role, the UvrABC repair system catalyzes the recognition and processing of DNA lesions. UvrA is an ATPase and a DNA-binding protein. A damage recognition complex composed of 2 UvrA and 2 UvrB subunits scans DNA for abnormalities. When the presence of a lesion has been verified by UvrB, the UvrA molecules dissociate. In Listeria innocua serovar 6a (strain ATCC BAA-680 / CLIP 11262), this protein is UvrABC system protein A.